Reading from the N-terminus, the 236-residue chain is uncharacterized protein (236 aa).

To M.tuberculosis Rv2557.

This is an uncharacterized protein from Mycobacterium tuberculosis (strain CDC 1551 / Oshkosh).